Here is a 259-residue protein sequence, read N- to C-terminus: Small ribosomal subunit protein eS1 (259 aa).

Disordered regions lie at residues 1–23 (MAVG…KTAD) and 235–259 (ESKS…VDSV). Over residues 8-19 (KVTKGGKKGGKK) the composition is skewed to basic residues. Over residues 246–259 (SRPDHYEPPKVDSV) the composition is skewed to basic and acidic residues.

This sequence belongs to the eukaryotic ribosomal protein eS1 family. Component of the small ribosomal subunit. Mature ribosomes consist of a small (40S) and a large (60S) subunit. The 40S subunit contains about 33 different proteins and 1 molecule of RNA (18S). The 60S subunit contains about 49 different proteins and 3 molecules of RNA (28S, 5.8S and 5S).

Its subcellular location is the cytoplasm. The sequence is that of Small ribosomal subunit protein eS1 from Schistosoma japonicum (Blood fluke).